Consider the following 439-residue polypeptide: Chromosomal replication initiator protein DnaA (439 aa).

Residues 1-75 are domain I, interacts with DnaA modulators; it reads MESWSRCLER…GIREVVLAIG (75 aa). The tract at residues 75–101 is domain II; sequence GSRPKTTELTVPVDTTGRLSQTVPFNG. The interval 102–319 is domain III, AAA+ region; it reads NLDTHYNFDN…GALNTLVARA (218 aa). Residues glycine 147, glycine 149, lysine 150, and threonine 151 each contribute to the ATP site. The domain IV, binds dsDNA stretch occupies residues 320 to 439; sequence NFTGRAVTIE…WDKLMRKFSE (120 aa).

It belongs to the DnaA family. In terms of assembly, oligomerizes as a right-handed, spiral filament on DNA at oriC.

The protein localises to the cytoplasm. Its function is as follows. Plays an essential role in the initiation and regulation of chromosomal replication. ATP-DnaA binds to the origin of replication (oriC) to initiate formation of the DNA replication initiation complex once per cell cycle. Binds the DnaA box (a 9 base pair repeat at the origin) and separates the double-stranded (ds)DNA. Forms a right-handed helical filament on oriC DNA; dsDNA binds to the exterior of the filament while single-stranded (ss)DNA is stabiized in the filament's interior. The ATP-DnaA-oriC complex binds and stabilizes one strand of the AT-rich DNA unwinding element (DUE), permitting loading of DNA polymerase. After initiation quickly degrades to an ADP-DnaA complex that is not apt for DNA replication. Binds acidic phospholipids. This Xylella fastidiosa (strain Temecula1 / ATCC 700964) protein is Chromosomal replication initiator protein DnaA.